The chain runs to 386 residues: Ribonucleoside-diphosphate reductase subunit M2 (386 aa).

A compositionally biased stretch (polar residues) spans 1–24 (MSSTRSPLKTKNENTISTKMNNMS). Residues 1-36 (MSSTRSPLKTKNENTISTKMNNMSFVDKENTPPSLS) are disordered. At Ser-6 the chain carries Phosphoserine. Phosphothreonine is present on Thr-31. Fe cation-binding residues include Asp-135, Glu-166, and His-169. The active site involves Tyr-173. Residues Glu-229, Glu-263, and His-266 each coordinate Fe cation.

The protein belongs to the ribonucleoside diphosphate reductase small chain family. Heterodimer of a large and a small subunit. Requires Fe cation as cofactor.

The protein localises to the cytoplasm. It carries out the reaction a 2'-deoxyribonucleoside 5'-diphosphate + [thioredoxin]-disulfide + H2O = a ribonucleoside 5'-diphosphate + [thioredoxin]-dithiol. Provides the precursors necessary for DNA synthesis. Catalyzes the biosynthesis of deoxyribonucleotides from the corresponding ribonucleotides. This chain is Ribonucleoside-diphosphate reductase subunit M2 (rrm2), found in Danio rerio (Zebrafish).